The sequence spans 206 residues: Glycerol-3-phosphate acyltransferase (206 aa).

A run of 5 helical transmembrane segments spans residues 3–23 (LGWLLVIGSYLLGSVSFSYII), 51–71 (VGPAVTVLLLDILKGVIAVVV), 83–103 (FAAAAGIAAIIGHNWPIYYGF), 113–133 (IGVLASLVPLAAVLAGVIAIG), and 162–182 (WFGYPVAYIYLTIIVAILSMW).

The protein belongs to the PlsY family. As to quaternary structure, probably interacts with PlsX.

It is found in the cell membrane. It carries out the reaction an acyl phosphate + sn-glycerol 3-phosphate = a 1-acyl-sn-glycero-3-phosphate + phosphate. The protein operates within lipid metabolism; phospholipid metabolism. Catalyzes the transfer of an acyl group from acyl-phosphate (acyl-PO(4)) to glycerol-3-phosphate (G3P) to form lysophosphatidic acid (LPA). This enzyme utilizes acyl-phosphate as fatty acyl donor, but not acyl-CoA or acyl-ACP. This is Glycerol-3-phosphate acyltransferase from Halalkalibacterium halodurans (strain ATCC BAA-125 / DSM 18197 / FERM 7344 / JCM 9153 / C-125) (Bacillus halodurans).